The following is a 175-amino-acid chain: Peptide deformylase (175 aa).

Fe cation is bound by residues Cys96 and His138. The active site involves Glu139. His142 is a Fe cation binding site.

This sequence belongs to the polypeptide deformylase family. Fe(2+) is required as a cofactor.

The catalysed reaction is N-terminal N-formyl-L-methionyl-[peptide] + H2O = N-terminal L-methionyl-[peptide] + formate. Its function is as follows. Removes the formyl group from the N-terminal Met of newly synthesized proteins. Requires at least a dipeptide for an efficient rate of reaction. N-terminal L-methionine is a prerequisite for activity but the enzyme has broad specificity at other positions. The protein is Peptide deformylase of Helicobacter acinonychis (strain Sheeba).